Here is a 511-residue protein sequence, read N- to C-terminus: Cytochrome P450 monooxygenase roqR (511 aa).

An N-terminal signal peptide occupies residues 1–23 (MSGYVLLTVQLAAVLLLVTLWRA). N-linked (GlcNAc...) asparagine glycans are attached at residues asparagine 364, asparagine 373, and asparagine 383. Cysteine 455 provides a ligand contact to heme.

The protein belongs to the cytochrome P450 family. It depends on heme as a cofactor.

Its pathway is alkaloid biosynthesis. Cytochrome P450 monooxygenase; part of the gene cluster that mediates the biosynthesis of the mycotoxins roquefortine C and meleagrin. The first stage is catalyzed by the dipeptide synthase roqA which condenses histidine and tryptophan to produce histidyltryptophanyldiketopiperazine (HTD). HTD is then converted to roquefortine C through two possible pathways. In the first pathway, prenyltransferase roqD transforms HTD to the intermediate roquefortine D, which is in turn converted to roquefortine C by the cytochrome P450 monooxygenase roqR. In the second pathway, HTD is first converted to the intermediate dehydrohistidyltryptophanyldi-ketopiperazine (DHTD) by roqR which is then prenylated by roqD to form roquefortine C. Roquefortine C can be further transformed to meleagrin via three more reactions including oxydation to glandicolin A by roqM, which is further reduced to glandicoline B by roqO. Finally, glandicoline B is converted to meleagrin by the glandicoline B O-methyltransferase roqN. More studies identified further branching and additional metabolites produced by the roquefortine/meleagrin cluster, including roquefortine F, roquefortine L, roquefortine M, roquefortine N and neoxaline. The protein is Cytochrome P450 monooxygenase roqR of Penicillium rubens (strain ATCC 28089 / DSM 1075 / NRRL 1951 / Wisconsin 54-1255) (Penicillium chrysogenum).